The chain runs to 576 residues: Proline--tRNA ligase (576 aa).

This sequence belongs to the class-II aminoacyl-tRNA synthetase family. ProS type 1 subfamily. As to quaternary structure, homodimer.

Its subcellular location is the cytoplasm. It carries out the reaction tRNA(Pro) + L-proline + ATP = L-prolyl-tRNA(Pro) + AMP + diphosphate. Catalyzes the attachment of proline to tRNA(Pro) in a two-step reaction: proline is first activated by ATP to form Pro-AMP and then transferred to the acceptor end of tRNA(Pro). As ProRS can inadvertently accommodate and process non-cognate amino acids such as alanine and cysteine, to avoid such errors it has two additional distinct editing activities against alanine. One activity is designated as 'pretransfer' editing and involves the tRNA(Pro)-independent hydrolysis of activated Ala-AMP. The other activity is designated 'posttransfer' editing and involves deacylation of mischarged Ala-tRNA(Pro). The misacylated Cys-tRNA(Pro) is not edited by ProRS. The polypeptide is Proline--tRNA ligase (Bordetella bronchiseptica (strain ATCC BAA-588 / NCTC 13252 / RB50) (Alcaligenes bronchisepticus)).